The following is a 338-amino-acid chain: Phenylalanine--tRNA ligase alpha subunit (338 aa).

Position 252 (glutamate 252) interacts with Mg(2+).

The protein belongs to the class-II aminoacyl-tRNA synthetase family. Phe-tRNA synthetase alpha subunit type 1 subfamily. Tetramer of two alpha and two beta subunits. Requires Mg(2+) as cofactor.

The protein localises to the cytoplasm. The catalysed reaction is tRNA(Phe) + L-phenylalanine + ATP = L-phenylalanyl-tRNA(Phe) + AMP + diphosphate + H(+). This is Phenylalanine--tRNA ligase alpha subunit from Fusobacterium nucleatum subsp. nucleatum (strain ATCC 25586 / DSM 15643 / BCRC 10681 / CIP 101130 / JCM 8532 / KCTC 2640 / LMG 13131 / VPI 4355).